A 462-amino-acid chain; its full sequence is MSKAHVVGLGKSGVAAARLLKREGWEVVLSDSNTSDTLLKQQQELAKEQITVELGYSLDFAGALPDLIIVSPGVPWDIPDLVKARDLGIETIGEMELAWRHLKSLPWVGITGTNGKTTTTALIAAIFQAAGFDAPACGNIGYAACEVALAEIPPDWIIGEMSSYQIESSVTLAPHISIWTTFTPDHLARHKTLENYYDIKAKLLRQSHLQVFNGDDAYLSKIGASHWPDAYWTSVQGKESLLGEKGFYIEDGWVVEQLPNSPPQRIVEASALRMVGAHNLQNLLMAVAAARLADISPNAIDKAVREFPGVAHRLEHICTWEGIDFINDSKATNYDAAEVGLASVKSPVVLIAGGEAKPGDDTAWLAKIQAQTSAVLLIGSAAPAFAQRLKEVGYTHYEIVETMEKAVRRSLELAKHHQAPVVLLSPACASFDQYPNFEARGDHFRELCLELVGEKETNSNHH.

Residue 112-118 (GTNGKTT) coordinates ATP.

It belongs to the MurCDEF family.

It localises to the cytoplasm. It carries out the reaction UDP-N-acetyl-alpha-D-muramoyl-L-alanine + D-glutamate + ATP = UDP-N-acetyl-alpha-D-muramoyl-L-alanyl-D-glutamate + ADP + phosphate + H(+). The protein operates within cell wall biogenesis; peptidoglycan biosynthesis. In terms of biological role, cell wall formation. Catalyzes the addition of glutamate to the nucleotide precursor UDP-N-acetylmuramoyl-L-alanine (UMA). This Nostoc sp. (strain PCC 7120 / SAG 25.82 / UTEX 2576) protein is UDP-N-acetylmuramoylalanine--D-glutamate ligase.